The following is a 386-amino-acid chain: Succinate--CoA ligase [ADP-forming] subunit beta (386 aa).

An ATP-grasp domain is found at 9-244; that stretch reads KELLREFGVA…TTEEDPREVE (236 aa). Residues Lys46, 53 to 55, Glu99, Ser102, and Glu107 contribute to the ATP site; that span reads GRG. 2 residues coordinate Mg(2+): Asn199 and Asp213. Residues Asn264 and 321–323 contribute to the substrate site; that span reads GIM.

It belongs to the succinate/malate CoA ligase beta subunit family. As to quaternary structure, heterotetramer of two alpha and two beta subunits. Requires Mg(2+) as cofactor.

It catalyses the reaction succinate + ATP + CoA = succinyl-CoA + ADP + phosphate. The enzyme catalyses GTP + succinate + CoA = succinyl-CoA + GDP + phosphate. The protein operates within carbohydrate metabolism; tricarboxylic acid cycle; succinate from succinyl-CoA (ligase route): step 1/1. Functionally, succinyl-CoA synthetase functions in the citric acid cycle (TCA), coupling the hydrolysis of succinyl-CoA to the synthesis of either ATP or GTP and thus represents the only step of substrate-level phosphorylation in the TCA. The beta subunit provides nucleotide specificity of the enzyme and binds the substrate succinate, while the binding sites for coenzyme A and phosphate are found in the alpha subunit. This Exiguobacterium sp. (strain ATCC BAA-1283 / AT1b) protein is Succinate--CoA ligase [ADP-forming] subunit beta.